A 661-amino-acid chain; its full sequence is MQANGAGGGGGGGGGGGGGGGGGGGQGQTPELACLSAQNGESSPSSSSSAGDLAHANGLLPSAPSAASNNSNSLNVNNGVPGGAAAASSATVAAASATTAASSSLATPELGSSLKKKKRLSQSDEDVIRLIGQHLNGLGLNQTVDLLMQESGCRLEHPSATKFRNHVMEGDWDKAENDLNELKPLVHSPHAIVVRGALEISQTLLGIIVRMKFLLLQQKYLEYLEDGKVLEALQVLRCELTPLKYNTERIHVLSGYLMCSHAEDLRAKAEWEGKGTASRSKLLDKLQTYLPPSVMLPPRRLQTLLRQAVELQRDRCLYHNTKLDNNLDSVSLLIDHVCSRRQFPCYTQQILTEHCNEVWFCKFSNDGTKLATGSKDTTVIIWQVDPDTHLLKLLKTLEGHAYGVSYIAWSPDDNYLVACGPDDCSELWLWNVQTGELRTKMSQSHEDSLTSVAWNPDGKRFVTGGQRGQFYQCDLDGNLLDSWEGVRVQCLWCLSDGKTVLASDTHQRIRGYNFEDLTDRNIVQEDHPIMSFTISKNGRLALLNVATQGVHLWDLQDRVLVRKYQGVTQGFYTIHSCFGGHNEDFIASGSEDHKVYIWHKRSELPIAELTGHTRTVNCVSWNPQIPSMMASASDDGTVRIWGPAPFIDHQNIEEECSSMDS.

Over residues 1–27 (MQANGAGGGGGGGGGGGGGGGGGGGQG) the composition is skewed to gly residues. 2 disordered regions span residues 1–70 (MQAN…ASNN) and 99–118 (TAAS…KKKK). Composition is skewed to low complexity over residues 56–70 (ANGL…ASNN) and 99–113 (TAAS…LGSS). A phosphoserine mark is found at serine 121 and serine 123. Residues 123-155 (SDEDVIRLIGQHLNGLGLNQTVDLLMQESGCRL) form the LisH domain. Positions 156 to 231 (EHPSATKFRN…EYLEDGKVLE (76 aa)) constitute a CTLH domain. WD repeat units follow at residues 353-392 (EHCN…HLLK), 399-438 (GHAY…GELR), 444-484 (SHED…DSWE), 524-563 (QEDH…LVRK), 566-608 (GVTQ…PIAE), and 611-651 (GHTR…DHQN).

As to quaternary structure, forms homooligomers. Identified in the CTLH complex that contains GID4, RANBP9 and/or RANBP10, MKLN1, MAEA, RMND5A (or alternatively its paralog RMND5B), GID8, ARMC8, WDR26 and YPEL5. Within this complex, MAEA, RMND5A (or alternatively its paralog RMND5B), GID8, WDR26, and RANBP9 and/or RANBP10 form the catalytic core, while GID4, MKLN1, ARMC8 and YPEL5 have ancillary roles. Interacts with DDB1-CUL4A/B E3 ligase complexes. Forms a complex composed of at least WDR26, a G-beta:gamma unit, and PLCB2. Interacts with AXIN1. Broadly expressed, with highest levels in heart and skeletal muscle.

It localises to the cytoplasm. It is found in the nucleus. Its subcellular location is the mitochondrion. Its function is as follows. G-beta-like protein involved in cell signal transduction. Acts as a negative regulator in MAPK signaling pathway. Functions as a scaffolding protein to promote G beta:gamma-mediated PLCB2 plasma membrane translocation and subsequent activation in leukocytes. Core component of the CTLH E3 ubiquitin-protein ligase complex that selectively accepts ubiquitin from UBE2H and mediates ubiquitination and subsequent proteasomal degradation of the transcription factor HBP1. Acts as a negative regulator of the canonical Wnt signaling pathway through preventing ubiquitination of beta-catenin CTNNB1 by the beta-catenin destruction complex, thus negatively regulating CTNNB1 degradation. Serves as a scaffold to coordinate PI3K/AKT pathway-driven cell growth and migration. Protects cells from oxidative stress-induced apoptosis via the down-regulation of AP-1 transcriptional activity as well as by inhibiting cytochrome c release from mitochondria. Also protects cells by promoting hypoxia-mediated autophagy and mitophagy. This is WD repeat-containing protein 26 (WDR26) from Homo sapiens (Human).